A 390-amino-acid polypeptide reads, in one-letter code: Lissencephaly-1 homolog (390 aa).

Residues 7–39 form the LisH domain; it reads QREEINRAVAEYLQNNGYSEAFNMLLKEASLSE. A coiled-coil region spans residues 54–80; sequence TTVLRLQRKVNDLEAKLLESQQEINHG. 7 WD repeats span residues 104–145, 146–185, 189–228, 231–270, 272–313, 316–355, and 358–390; these read GHRL…KTLK, GHTDAVNDIAIDAAGKQLVSCSTDLTIKLWDFGQSYDCLK, GHEHTVSSVTFLPTGDFVLSASRDHTIKQWDISTGYCVFT, GHNDWVRMIRISHDGTLFASGSLDQTVSVWSLPRKQRNWY, EIMS…VIFT, AHENWVRGLAFHPKGKYLVSVADDKMMRIWELSAQRCMKA, and AHEHFVSTVAFHQTNPYVITGSVDMSCKVWECR.

It belongs to the WD repeat LIS1/nudF family.

It localises to the cytoplasm. It is found in the cytoskeleton. The protein localises to the microtubule organizing center. The protein resides in the centrosome. In terms of biological role, positively regulates the activity of the minus-end directed microtubule motor protein dynein. May enhance dynein-mediated microtubule sliding by targeting dynein to the microtubule plus end. Required for several dynein- and microtubule-dependent processes. The sequence is that of Lissencephaly-1 homolog from Caenorhabditis briggsae.